The sequence spans 867 residues: Ent-copalyl diphosphate synthase 1, chloroplastic (867 aa).

The N-terminal 35 residues, 1 to 35 (MIHLHSPPTAPAAFGGAGSADWRRRRRWSWSSSSR), are a transit peptide targeting the chloroplast. The segment at 1–134 (MIHLHSPPTA…ADEEADDELQ (134 aa)) is disordered. Residues 51–64 (RGGDDGGGEDHHAD) are compositionally biased toward basic and acidic residues. Over residues 74 to 89 (AWRARATTAGVSSSSS) the composition is skewed to low complexity. A compositionally biased stretch (basic and acidic residues) spans 99-121 (IEHETPRITKWPNESRDLDDHQQ). The span at 124-133 (EADEEADDEL) shows a compositional bias: acidic residues. Lys286 is a binding site for substrate. The short motif at 418–421 (EVDD) is the DXDD motif element. Lys504 serves as a coordination point for substrate.

This sequence belongs to the terpene synthase family. The cofactor is Mg(2+).

Its subcellular location is the plastid. It localises to the chloroplast. It carries out the reaction (2E,6E,10E)-geranylgeranyl diphosphate = ent-copalyl diphosphate. Its pathway is plant hormone biosynthesis; gibberellin biosynthesis. Its function is as follows. Catalyzes the conversion of geranylgeranyl diphosphate to the gibberellin precursor ent-copalyl diphosphate. This Oryza sativa subsp. japonica (Rice) protein is Ent-copalyl diphosphate synthase 1, chloroplastic (CPS1).